A 376-amino-acid chain; its full sequence is Putative F-box protein At2g33200 (376 aa).

The F-box domain maps to 6-53 (YDWSKLCHDILRLILESLHYKDYHRARTVCSNWYTASTTCKRPLYPWR).

The sequence is that of Putative F-box protein At2g33200 from Arabidopsis thaliana (Mouse-ear cress).